Consider the following 330-residue polypeptide: MAVTMADITKLRKMTGAGMMDCKNALTEAEGDYDKAMEIIRKKGQAVAAKRSERDASEGCVLAKTTGDYAVVIALKCETDFVAQNADFVKLTQDILDLAVANKCKTLDEVKALPMGNGTVQDAVVDRSGITGEKMELDGYMTVEGTSTAVYNHMNRNGLCTIVAFNKNVDDQLAKQVAMQIAAMNPIAIDEDGVSEEVKEKEIAVAIEKTKAEQVQKAVEAALKKANINPAHVDSEEHMESNMAKGWITAEDIAKAKEIIATVSAEKAAHLPEQMIQNIAKGRLGKFLKEVCLLNQEDIMDAKKTVREVLAAADPELKVLDFKRFTLKAE.

The tract at residues 79 to 82 (TDFV) is involved in Mg(2+) ion dislocation from EF-Tu.

This sequence belongs to the EF-Ts family.

It localises to the cytoplasm. Its function is as follows. Associates with the EF-Tu.GDP complex and induces the exchange of GDP to GTP. It remains bound to the aminoacyl-tRNA.EF-Tu.GTP complex up to the GTP hydrolysis stage on the ribosome. This chain is Elongation factor Ts, found in Bacteroides thetaiotaomicron (strain ATCC 29148 / DSM 2079 / JCM 5827 / CCUG 10774 / NCTC 10582 / VPI-5482 / E50).